A 281-amino-acid chain; its full sequence is Orotidine 5'-phosphate decarboxylase (281 aa).

Catalysis depends on Lys-94, which acts as the Proton donor.

This sequence belongs to the OMP decarboxylase family. Type 2 subfamily.

It catalyses the reaction orotidine 5'-phosphate + H(+) = UMP + CO2. Its pathway is pyrimidine metabolism; UMP biosynthesis via de novo pathway; UMP from orotate: step 2/2. The chain is Orotidine 5'-phosphate decarboxylase from Thermomicrobium roseum (strain ATCC 27502 / DSM 5159 / P-2).